A 213-amino-acid polypeptide reads, in one-letter code: Kiwellin (213 aa).

The signal sequence occupies residues 1-24 (MAQLSLLVLSLFLTLISLPPPGAS). Disulfide bonds link Cys-28-Cys-60, Cys-32-Cys-44, and Cys-38-Cys-49. Pro-65 and Pro-67 each carry 4-hydroxyproline. Cystine bridges form between Cys-72–Cys-90, Cys-80–Cys-172, Cys-119–Cys-144, and Cys-166–Cys-182. Residues 91–121 (SPPVTSSTPAKLTNNDFSEGGDGGGPSECDE) form a disordered region. The segment covering 93-107 (PVTSSTPAKLTNNDF) has biased composition (polar residues).

The protein belongs to the kiwellin family. Undergoes proteolytic cleavage by actinidin to produce kissper and KiTH. Three forms of KiTH are produced by cleavage at different sites.

Its subcellular location is the secreted. Functionally, kissper is an anion-selective pore-forming peptide. This chain is Kiwellin, found in Actinidia chinensis var. chinensis (Chinese soft-hair kiwi).